We begin with the raw amino-acid sequence, 296 residues long: Polyadenylate-binding protein 2 (296 aa).

The interval Met-1–Asp-102 is disordered. 2 stretches are compositionally biased toward gly residues: residues Leu-19 to Asp-31 and Gly-71 to Gly-82. Residues Glu-84–Gly-97 are compositionally biased toward acidic residues. Residues Asp-107–Ser-141 adopt a coiled-coil conformation. The segment at Asn-146–Tyr-296 is necessary for homooligomerization. Residues Arg-163–Thr-240 form the RRM domain.

In terms of assembly, monomer and homooligomer. Binds RNA as a monomer and oligomerizes when bound to poly(A).

It is found in the nucleus. The protein localises to the cytoplasm. Functionally, involved in the 3'-end formation of mRNA precursors (pre-mRNA) by the addition of a poly(A) tail of 200-250 nt to the upstream cleavage product. Stimulates poly(A) polymerase (PAPOLA) conferring processivity on the poly(A) tail elongation reaction and also controls the poly(A) tail length. Increases the affinity of poly(A) polymerase for RNA. Binds to poly(A) and to poly(G) with high affinity. May protect the poly(A) tail from degradation. This is Polyadenylate-binding protein 2 from Xenopus tropicalis (Western clawed frog).